A 217-amino-acid chain; its full sequence is Thymidylate kinase (217 aa).

An ATP-binding site is contributed by 7–14 (GIEGTGKT).

Belongs to the thymidylate kinase family.

The catalysed reaction is dTMP + ATP = dTDP + ADP. Its function is as follows. Phosphorylation of dTMP to form dTDP in both de novo and salvage pathways of dTTP synthesis. The protein is Thymidylate kinase of Maridesulfovibrio salexigens (strain ATCC 14822 / DSM 2638 / NCIMB 8403 / VKM B-1763) (Desulfovibrio salexigens).